Consider the following 157-residue polypeptide: 2-C-methyl-D-erythritol 2,4-cyclodiphosphate synthase (157 aa).

Positions 8 and 10 each coordinate a divalent metal cation. 4-CDP-2-C-methyl-D-erythritol 2-phosphate is bound by residues 8–10 and 34–35; these read DVH and HS. Histidine 42 provides a ligand contact to a divalent metal cation. Residues 56–58, 61–65, 132–135, phenylalanine 139, and arginine 142 contribute to the 4-CDP-2-C-methyl-D-erythritol 2-phosphate site; these read DIG, FPDTD, and TTTE.

Belongs to the IspF family. In terms of assembly, homotrimer. It depends on a divalent metal cation as a cofactor.

The enzyme catalyses 4-CDP-2-C-methyl-D-erythritol 2-phosphate = 2-C-methyl-D-erythritol 2,4-cyclic diphosphate + CMP. The protein operates within isoprenoid biosynthesis; isopentenyl diphosphate biosynthesis via DXP pathway; isopentenyl diphosphate from 1-deoxy-D-xylulose 5-phosphate: step 4/6. Involved in the biosynthesis of isopentenyl diphosphate (IPP) and dimethylallyl diphosphate (DMAPP), two major building blocks of isoprenoid compounds. Catalyzes the conversion of 4-diphosphocytidyl-2-C-methyl-D-erythritol 2-phosphate (CDP-ME2P) to 2-C-methyl-D-erythritol 2,4-cyclodiphosphate (ME-CPP) with a corresponding release of cytidine 5-monophosphate (CMP). This Geotalea uraniireducens (strain Rf4) (Geobacter uraniireducens) protein is 2-C-methyl-D-erythritol 2,4-cyclodiphosphate synthase.